A 615-amino-acid chain; its full sequence is DNA mismatch repair protein MutL (615 aa).

Residues Phe363 to Tyr397 are disordered. A compositionally biased stretch (low complexity) spans Ala364 to Pro391.

It belongs to the DNA mismatch repair MutL/HexB family.

In terms of biological role, this protein is involved in the repair of mismatches in DNA. It is required for dam-dependent methyl-directed DNA mismatch repair. May act as a 'molecular matchmaker', a protein that promotes the formation of a stable complex between two or more DNA-binding proteins in an ATP-dependent manner without itself being part of a final effector complex. The sequence is that of DNA mismatch repair protein MutL from Shigella boydii serotype 4 (strain Sb227).